The following is a 263-amino-acid chain: Phosphatidylglycerol--prolipoprotein diacylglyceryl transferase (263 aa).

A run of 4 helical transmembrane segments spans residues 15–35 (ISIH…VYLA), 52–72 (FILL…VIFQ), 83–103 (IFAI…GAAV), and 112–132 (AIAV…AQSI). Arg-134 lines the a 1,2-diacyl-sn-glycero-3-phospho-(1'-sn-glycerol) pocket. Transmembrane regions (helical) follow at residues 170-190 (VPTF…ILGL), 200-220 (GDVT…IEGM), and 227-247 (FVGL…GAVL).

This sequence belongs to the Lgt family.

Its subcellular location is the cell membrane. It carries out the reaction L-cysteinyl-[prolipoprotein] + a 1,2-diacyl-sn-glycero-3-phospho-(1'-sn-glycerol) = an S-1,2-diacyl-sn-glyceryl-L-cysteinyl-[prolipoprotein] + sn-glycerol 1-phosphate + H(+). Its pathway is protein modification; lipoprotein biosynthesis (diacylglyceryl transfer). Catalyzes the transfer of the diacylglyceryl group from phosphatidylglycerol to the sulfhydryl group of the N-terminal cysteine of a prolipoprotein, the first step in the formation of mature lipoproteins. The polypeptide is Phosphatidylglycerol--prolipoprotein diacylglyceryl transferase (Streptococcus thermophilus (strain ATCC BAA-491 / LMD-9)).